Consider the following 393-residue polypeptide: NAD(P)H-quinone oxidoreductase subunit H, chloroplastic (393 aa).

It belongs to the complex I 49 kDa subunit family. NDH is composed of at least 16 different subunits, 5 of which are encoded in the nucleus.

It is found in the plastid. Its subcellular location is the chloroplast thylakoid membrane. The enzyme catalyses a plastoquinone + NADH + (n+1) H(+)(in) = a plastoquinol + NAD(+) + n H(+)(out). It catalyses the reaction a plastoquinone + NADPH + (n+1) H(+)(in) = a plastoquinol + NADP(+) + n H(+)(out). Functionally, NDH shuttles electrons from NAD(P)H:plastoquinone, via FMN and iron-sulfur (Fe-S) centers, to quinones in the photosynthetic chain and possibly in a chloroplast respiratory chain. The immediate electron acceptor for the enzyme in this species is believed to be plastoquinone. Couples the redox reaction to proton translocation, and thus conserves the redox energy in a proton gradient. In Oenothera biennis (German evening primrose), this protein is NAD(P)H-quinone oxidoreductase subunit H, chloroplastic.